The chain runs to 617 residues: Dihydroxy-acid dehydratase (617 aa).

Asp-81 provides a ligand contact to Mg(2+). Cys-122 is a [2Fe-2S] cluster binding site. Residues Asp-123 and Lys-124 each coordinate Mg(2+). An N6-carboxylysine modification is found at Lys-124. Cys-195 contacts [2Fe-2S] cluster. Mg(2+) is bound at residue Glu-491. Ser-517 functions as the Proton acceptor in the catalytic mechanism.

It belongs to the IlvD/Edd family. As to quaternary structure, homodimer. [2Fe-2S] cluster serves as cofactor. Requires Mg(2+) as cofactor.

The enzyme catalyses (2R)-2,3-dihydroxy-3-methylbutanoate = 3-methyl-2-oxobutanoate + H2O. The catalysed reaction is (2R,3R)-2,3-dihydroxy-3-methylpentanoate = (S)-3-methyl-2-oxopentanoate + H2O. Its pathway is amino-acid biosynthesis; L-isoleucine biosynthesis; L-isoleucine from 2-oxobutanoate: step 3/4. The protein operates within amino-acid biosynthesis; L-valine biosynthesis; L-valine from pyruvate: step 3/4. Its function is as follows. Functions in the biosynthesis of branched-chain amino acids. Catalyzes the dehydration of (2R,3R)-2,3-dihydroxy-3-methylpentanoate (2,3-dihydroxy-3-methylvalerate) into 2-oxo-3-methylpentanoate (2-oxo-3-methylvalerate) and of (2R)-2,3-dihydroxy-3-methylbutanoate (2,3-dihydroxyisovalerate) into 2-oxo-3-methylbutanoate (2-oxoisovalerate), the penultimate precursor to L-isoleucine and L-valine, respectively. The sequence is that of Dihydroxy-acid dehydratase from Hydrogenovibrio crunogenus (strain DSM 25203 / XCL-2) (Thiomicrospira crunogena).